We begin with the raw amino-acid sequence, 351 residues long: uncharacterized protein (351 aa).

Positions 1–27 (MKNKKRVLIASSLSCAILLLSAATTQA) are cleaved as a signal peptide. A disordered region spans residues 29 to 71 (SAHKDSQDQNKKEHVDKSQQKDKRNVTNKDKNSTVPDDIGKNG). A compositionally biased stretch (basic and acidic residues) spans 30-60 (AHKDSQDQNKKEHVDKSQQKDKRNVTNKDKN).

Belongs to the aerolysin family.

This is an uncharacterized protein from Staphylococcus aureus (strain Mu50 / ATCC 700699).